Consider the following 364-residue polypeptide: GTPase Obg (364 aa).

In terms of domain architecture, Obg spans M1–L159. Positions A160–K334 constitute an OBG-type G domain. Residues G166 to S173, F191 to H195, D213 to G216, N284 to D287, and S315 to L317 contribute to the GTP site. Residues S173 and T193 each contribute to the Mg(2+) site. The tract at residues Q337–D364 is disordered.

Belongs to the TRAFAC class OBG-HflX-like GTPase superfamily. OBG GTPase family. In terms of assembly, monomer. Mg(2+) serves as cofactor.

It is found in the cytoplasm. Its function is as follows. An essential GTPase which binds GTP, GDP and possibly (p)ppGpp with moderate affinity, with high nucleotide exchange rates and a fairly low GTP hydrolysis rate. Plays a role in control of the cell cycle, stress response, ribosome biogenesis and in those bacteria that undergo differentiation, in morphogenesis control. The chain is GTPase Obg from Polaromonas naphthalenivorans (strain CJ2).